The following is a 761-amino-acid chain: Hyperosmolality-gated Ca2+ permeable channel 1.6 (761 aa).

Helical transmembrane passes span 7–27 (IGVA…AFAI), 101–121 (IYLL…TTMV), 156–176 (PRFW…CFIL), 375–395 (LIVG…IAFV), 419–439 (LLKS…FLLF), 467–487 (FYMF…TAFQ), 512–532 (ATFF…GEIL), 583–603 (AAVS…AFVV), 630–650 (VVTA…TKHA), and 653–673 (STPL…HCKN). A compositionally biased stretch (basic and acidic residues) spans 718-731 (RVGEDPEPEEKLES). Residues 718–761 (RVGEDPEPEEKLESDMSPPDLVATKRWSWRNTPLPSKDSCREIP) form a disordered region.

It belongs to the CSC1 (TC 1.A.17) family.

The protein localises to the membrane. Acts as an osmosensitive calcium-permeable cation channel. The protein is Hyperosmolality-gated Ca2+ permeable channel 1.6 of Arabidopsis thaliana (Mouse-ear cress).